Here is a 232-residue protein sequence, read N- to C-terminus: Protein TIFY 10c (232 aa).

Residues P54 to L73 form a disordered region. Residues A114–T149 form the Tify domain. The segment at D151–L176 is disordered. Positions N156 to L165 are enriched in polar residues. The Jas signature appears at P177–Q202. Positions A179–R186 match the Nuclear localization signal motif.

It belongs to the TIFY/JAZ family. Interacts with BHLH148. Interacts with COI1B in a coronatine-dependent manner. Coronatine is an analog of jasmonoyl isoleucine (JA-Ile). Interacts with TIFY5/JAZ2, TIFY6B/JAZ4, TIFY9/JAZ5, TIFY11A, TIFY11D/JAZ12 and TIFY11G/JAZ15. Post-translationally, ubiquitinated. Increase in jasmonoyl isoleucine (JA-Ile) levels mediates its degradation via COI1B-mediated proteasome pathway.

The protein localises to the nucleus. It is found in the cytoplasm. Its subcellular location is the cytosol. Its function is as follows. Repressor of jasmonate (JA) responses. Acts as a repressor of JA-induced resistance to the bacterial blight pathogen Xanthomonas oryzae pv. oryzae (Xoo). Regulates JA-induced accumulation of linalool at the transcriptional level of linalool synthase gene LIS. Linalool is important for resistance to bacterial blight pathogen Xoo. This Oryza sativa subsp. indica (Rice) protein is Protein TIFY 10c.